A 396-amino-acid polypeptide reads, in one-letter code: Enoyl-[acyl-carrier-protein] reductase [NADH] (396 aa).

NAD(+) contacts are provided by residues 47–52, 73–74, 110–111, and 138–139; these read GASTGF, FE, DA, and LA. Tyr-224 serves as a coordination point for substrate. The active-site Proton donor is the Tyr-234. NAD(+)-binding positions include Lys-243 and 272 to 274; that span reads LVT.

This sequence belongs to the TER reductase family. As to quaternary structure, monomer.

The catalysed reaction is a 2,3-saturated acyl-[ACP] + NAD(+) = a (2E)-enoyl-[ACP] + NADH + H(+). The protein operates within lipid metabolism; fatty acid biosynthesis. Involved in the final reduction of the elongation cycle of fatty acid synthesis (FAS II). Catalyzes the reduction of a carbon-carbon double bond in an enoyl moiety that is covalently linked to an acyl carrier protein (ACP). The sequence is that of Enoyl-[acyl-carrier-protein] reductase [NADH] from Cytophaga hutchinsonii (strain ATCC 33406 / DSM 1761 / CIP 103989 / NBRC 15051 / NCIMB 9469 / D465).